We begin with the raw amino-acid sequence, 151 residues long: Probable ubiquitin-conjugating enzyme E2 W-A (151 aa).

Residues 3–151 (SMQKRLQKEL…TKWWYHDDTC (149 aa)) form the UBC core domain. The active-site Glycyl thioester intermediate is C91.

Belongs to the ubiquitin-conjugating enzyme family.

The protein resides in the nucleus. The enzyme catalyses S-ubiquitinyl-[E1 ubiquitin-activating enzyme]-L-cysteine + [E2 ubiquitin-conjugating enzyme]-L-cysteine = [E1 ubiquitin-activating enzyme]-L-cysteine + S-ubiquitinyl-[E2 ubiquitin-conjugating enzyme]-L-cysteine.. It catalyses the reaction S-ubiquitinyl-[E1 ubiquitin-activating enzyme]-L-cysteine + [acceptor protein]-N-terminal-amino acid = [E1 ubiquitin-activating enzyme]-L-cysteine + N-terminal-ubiquitinyl-[acceptor protein].. Its pathway is protein modification; protein ubiquitination. In terms of biological role, accepts ubiquitin from the E1 complex and catalyzes its covalent attachment to other proteins. Catalyzes monoubiquitination. Involved in degradation of misfolded chaperone substrate and DNA repair. The polypeptide is Probable ubiquitin-conjugating enzyme E2 W-A (ube2wa) (Danio rerio (Zebrafish)).